A 300-amino-acid chain; its full sequence is UDP-N-acetylenolpyruvoylglucosamine reductase (300 aa).

In terms of domain architecture, FAD-binding PCMH-type spans Lys27 to Gly192. Arg171 is an active-site residue. Ser221 (proton donor) is an active-site residue. Residue Glu291 is part of the active site.

Belongs to the MurB family. It depends on FAD as a cofactor.

The protein resides in the cytoplasm. The enzyme catalyses UDP-N-acetyl-alpha-D-muramate + NADP(+) = UDP-N-acetyl-3-O-(1-carboxyvinyl)-alpha-D-glucosamine + NADPH + H(+). It functions in the pathway cell wall biogenesis; peptidoglycan biosynthesis. Cell wall formation. This Streptococcus agalactiae serotype Ia (strain ATCC 27591 / A909 / CDC SS700) protein is UDP-N-acetylenolpyruvoylglucosamine reductase.